A 693-amino-acid chain; its full sequence is Lamina-associated polypeptide 2, isoforms alpha/zeta (693 aa).

The 44-residue stretch at 5–48 (LEDPSVLTKDKLKSELVANNVTLPAGEQRKDVYVQLYLQHLTAR) folds into the LEM-like domain. Disordered stretches follow at residues 48–113 (RNRP…DVTE), 148–211 (LREQ…LAST), and 227–270 (TRPP…KLAP). The segment at 49–107 (NRPPLAAGANSKGPPDFSSDEEREPTPVLGSGASVGRGRGAVGRKATKKTDKPRLEDKD) is linker. A phosphoserine mark is found at S59, S66, and S67. The residue at position 74 (T74) is a Phosphothreonine. A phosphoserine mark is found at S79 and S82. Residues R85 and R87 each carry the omega-N-methylarginine modification. The segment covering 96 to 105 (KKTDKPRLED) has biased composition (basic and acidic residues). The region spanning 108–152 (DLDVTELSNEELLDQLVRYGVNPGPIVGTTRKLYEKKLLKLREQG) is the LEM domain. T153 carries the post-translational modification Phosphothreonine. Residues 154–177 (ESRSSTPLPTVSSSAENTRQNGSN) show a composition bias toward polar residues. 2 positions are modified to phosphoserine: S155 and S158. Residues T159 and T163 each carry the phosphothreonine modification. S165 and S167 each carry phosphoserine. A compositionally biased stretch (basic and acidic residues) spans 178–190 (DSDRYSDNDEGKK). Residues 190–196 (KKEHKKV) carry the Nuclear localization signal motif. Residue S206 is modified to N6-acetyllysine. Basic and acidic residues predominate over residues 245-254 (TKRDPPRETC). S310 carries the post-translational modification Phosphoserine. R329 is subject to Omega-N-methylarginine. The interval 332-351 (KSRAQPLRAEEPGVSDQSVF) is disordered. Residues S349, S352, S368, S420, and S422 each carry the phosphoserine modification. Residues 412-422 (QSSYQDSESLS) are compositionally biased toward low complexity. Residues 412 to 442 (QSSYQDSESLSPPRKVPRLSEKPARGGDSGS) are disordered. The stretch at 557 to 656 (TESCDKHLDL…MGRRYLWLKD (100 aa)) forms a coiled coil. K655 is modified (N6-acetyllysine).

Belongs to the LEM family. As to quaternary structure, homooligomer. Interacts with LMNA, BANF1 and RB1 and with chromosomes. Associates directly or indirectly with lamins at specific cell-cycle stages. Interacts with CMTM6. Phosphorylated in a mitose-specific manner.

It is found in the nucleus. It localises to the chromosome. Its function is as follows. May be involved in the structural organization of the nucleus and in the post-mitotic nuclear assembly. Plays an important role, together with LMNA, in the nuclear anchorage of RB1. This is Lamina-associated polypeptide 2, isoforms alpha/zeta (Tmpo) from Mus musculus (Mouse).